The primary structure comprises 637 residues: Chaperone protein dnaK2 (637 aa).

Thr197 carries the post-translational modification Phosphothreonine; by autocatalysis. Residues 602–637 (AAAGGAAPGGDAGASAASGGGDASDDVIDAEFTETK) are disordered. A compositionally biased stretch (gly residues) spans 603–623 (AAGGAAPGGDAGASAASGGGD). Over residues 624 to 637 (ASDDVIDAEFTETK) the composition is skewed to acidic residues.

The protein belongs to the heat shock protein 70 family.

Its function is as follows. Acts as a chaperone. The polypeptide is Chaperone protein dnaK2 (dnaK2) (Parasynechococcus marenigrum (strain WH8102)).